A 390-amino-acid chain; its full sequence is NADH-quinone oxidoreductase subunit D (390 aa).

The protein belongs to the complex I 49 kDa subunit family. NDH-1 is composed of 14 different subunits. Subunits NuoB, C, D, E, F, and G constitute the peripheral sector of the complex.

The protein localises to the cell inner membrane. It carries out the reaction a quinone + NADH + 5 H(+)(in) = a quinol + NAD(+) + 4 H(+)(out). In terms of biological role, NDH-1 shuttles electrons from NADH, via FMN and iron-sulfur (Fe-S) centers, to quinones in the respiratory chain. The immediate electron acceptor for the enzyme in this species is believed to be ubiquinone. Couples the redox reaction to proton translocation (for every two electrons transferred, four hydrogen ions are translocated across the cytoplasmic membrane), and thus conserves the redox energy in a proton gradient. This Geobacter sulfurreducens (strain ATCC 51573 / DSM 12127 / PCA) protein is NADH-quinone oxidoreductase subunit D.